Here is a 209-residue protein sequence, read N- to C-terminus: Glycine cleavage system H-like protein gcvH4 (209 aa).

Over residues 35–51 (NNNNNNNNNNNNNNNNN) the composition is skewed to low complexity. Residues 35-56 (NNNNNNNNNNNNNNNNNRNKKL) form a disordered region. Residues 73 to 159 (FATIGITNYV…KTTTTTTKIK (87 aa)) enclose the Lipoyl-binding domain.

Belongs to the GcvH family.

The polypeptide is Glycine cleavage system H-like protein gcvH4 (gcvH4) (Dictyostelium discoideum (Social amoeba)).